A 410-amino-acid polypeptide reads, in one-letter code: Tryptophan synthase beta chain (410 aa).

Position 98 is an N6-(pyridoxal phosphate)lysine (Lys98).

The protein belongs to the TrpB family. In terms of assembly, tetramer of two alpha and two beta chains. Requires pyridoxal 5'-phosphate as cofactor.

It carries out the reaction (1S,2R)-1-C-(indol-3-yl)glycerol 3-phosphate + L-serine = D-glyceraldehyde 3-phosphate + L-tryptophan + H2O. It participates in amino-acid biosynthesis; L-tryptophan biosynthesis; L-tryptophan from chorismate: step 5/5. Its function is as follows. The beta subunit is responsible for the synthesis of L-tryptophan from indole and L-serine. The sequence is that of Tryptophan synthase beta chain from Dinoroseobacter shibae (strain DSM 16493 / NCIMB 14021 / DFL 12).